A 100-amino-acid chain; its full sequence is Integration host factor subunit beta (100 aa).

The interval 81 to 100 (KPGKELRDRVNEDEHEEAHT) is disordered. The span at 82 to 100 (PGKELRDRVNEDEHEEAHT) shows a compositional bias: basic and acidic residues.

This sequence belongs to the bacterial histone-like protein family. Heterodimer of an alpha and a beta chain.

In terms of biological role, this protein is one of the two subunits of integration host factor, a specific DNA-binding protein that functions in genetic recombination as well as in transcriptional and translational control. This chain is Integration host factor subunit beta (ihfB), found in Pseudomonas putida (Arthrobacter siderocapsulatus).